We begin with the raw amino-acid sequence, 861 residues long: DNA mismatch repair protein MutS (861 aa).

616-623 (GPNMGGKS) serves as a coordination point for ATP.

Belongs to the DNA mismatch repair MutS family.

This protein is involved in the repair of mismatches in DNA. It is possible that it carries out the mismatch recognition step. This protein has a weak ATPase activity. This Haemophilus influenzae (strain PittEE) protein is DNA mismatch repair protein MutS.